Consider the following 525-residue polypeptide: Tigger transposable element-derived protein 2 (525 aa).

Residues 1–52 (MLGKRKRVVLTIKDKLDIIKKLEEGNSFKKLSVLYGIGESTVRDIKKNKERI) enclose the HTH psq-type domain. DNA-binding regions (H-T-H motif) lie at residues 28-48 (FKKL…IKKN) and 100-132 (TICA…FKQR). Residues 67 to 139 (KRKSMKSSTY…KQRHGIPKAA (73 aa)) enclose the HTH CENPB-type domain. Residues 168–385 (LLPEQIYGAD…IRSNTITRAW (218 aa)) enclose the DDE-1 domain.

This sequence belongs to the tigger transposable element derived protein family.

The protein localises to the nucleus. The protein is Tigger transposable element-derived protein 2 (Tigd2) of Mus musculus (Mouse).